The chain runs to 457 residues: Siroheme synthase 2 (457 aa).

A precorrin-2 dehydrogenase /sirohydrochlorin ferrochelatase region spans residues 1–204 (MDHLPIFCQL…DDRQAVADTT (204 aa)). NAD(+) contacts are provided by residues 22 to 23 (DV) and 43 to 44 (LD). A Phosphoserine modification is found at S128. Residues 216-457 (GEVVLVGAGP…RDKLNWFSNH (242 aa)) form a uroporphyrinogen-III C-methyltransferase region. Position 225 (P225) interacts with S-adenosyl-L-methionine. D248 acts as the Proton acceptor in catalysis. Catalysis depends on K270, which acts as the Proton donor. Residues 301–303 (GGD), I306, 331–332 (TA), M382, and G411 contribute to the S-adenosyl-L-methionine site.

In the N-terminal section; belongs to the precorrin-2 dehydrogenase / sirohydrochlorin ferrochelatase family. This sequence in the C-terminal section; belongs to the precorrin methyltransferase family.

The enzyme catalyses uroporphyrinogen III + 2 S-adenosyl-L-methionine = precorrin-2 + 2 S-adenosyl-L-homocysteine + H(+). It carries out the reaction precorrin-2 + NAD(+) = sirohydrochlorin + NADH + 2 H(+). It catalyses the reaction siroheme + 2 H(+) = sirohydrochlorin + Fe(2+). It functions in the pathway cofactor biosynthesis; adenosylcobalamin biosynthesis; precorrin-2 from uroporphyrinogen III: step 1/1. The protein operates within cofactor biosynthesis; adenosylcobalamin biosynthesis; sirohydrochlorin from precorrin-2: step 1/1. Its pathway is porphyrin-containing compound metabolism; siroheme biosynthesis; precorrin-2 from uroporphyrinogen III: step 1/1. It participates in porphyrin-containing compound metabolism; siroheme biosynthesis; siroheme from sirohydrochlorin: step 1/1. It functions in the pathway porphyrin-containing compound metabolism; siroheme biosynthesis; sirohydrochlorin from precorrin-2: step 1/1. Functionally, multifunctional enzyme that catalyzes the SAM-dependent methylations of uroporphyrinogen III at position C-2 and C-7 to form precorrin-2 via precorrin-1. Then it catalyzes the NAD-dependent ring dehydrogenation of precorrin-2 to yield sirohydrochlorin. Finally, it catalyzes the ferrochelation of sirohydrochlorin to yield siroheme. In Klebsiella pneumoniae subsp. pneumoniae (strain ATCC 700721 / MGH 78578), this protein is Siroheme synthase 2.